Reading from the N-terminus, the 392-residue chain is Phosphoglycerate kinase (392 aa).

Substrate-binding positions include 21–23, arginine 36, 59–62, arginine 113, and arginine 146; these read DLN and HRGR. Residues lysine 197, glutamate 314, and 340-343 contribute to the ATP site; that span reads GGDT.

This sequence belongs to the phosphoglycerate kinase family. Monomer.

The protein localises to the cytoplasm. The catalysed reaction is (2R)-3-phosphoglycerate + ATP = (2R)-3-phospho-glyceroyl phosphate + ADP. The protein operates within carbohydrate degradation; glycolysis; pyruvate from D-glyceraldehyde 3-phosphate: step 2/5. This chain is Phosphoglycerate kinase, found in Vesicomyosocius okutanii subsp. Calyptogena okutanii (strain HA).